The primary structure comprises 202 residues: Secreted RxLR effector protein 11 (202 aa).

A signal peptide spans M1–A23. A RxLR-dEER motif is present at residues R49–R61.

The protein belongs to the RxLR effector family.

Its subcellular location is the secreted. It is found in the host cytoplasm. The protein resides in the host nucleus. In terms of biological role, effector that acts as a broad suppressor of cell death to interrupt plant immunity. Inhibits cell death induced by cell death-inducing proteins, including the PAMP elicitor INF1 from P.infestans. The protein is Secreted RxLR effector protein 11 of Plasmopara viticola (Downy mildew of grapevine).